Here is a 32-residue protein sequence, read N- to C-terminus: Potassium channel toxin alpha-KTx 10.6 (32 aa).

3 cysteine pairs are disulfide-bonded: C3/C22, C8/C27, and C12/C29.

As to expression, expressed by the venom gland.

It localises to the secreted. Blocks human voltage-gated potassium (Kv) channels Kv1.2/KCNA2 and Kv1.3/KCNA3. Does not block human Kv1.1 at 100nM concentration. The protein is Potassium channel toxin alpha-KTx 10.6 of Centruroides bonito (Scorpion).